The primary structure comprises 179 residues: Archaemetzincin (179 aa).

Histidine 128 contributes to the Zn(2+) binding site. Glutamate 129 serves as the catalytic Proton acceptor. Residues histidine 132, histidine 138, cysteine 139, cysteine 144, cysteine 163, and cysteine 166 each contribute to the Zn(2+) site.

Belongs to the peptidase M54 family. As to quaternary structure, monomer. The cofactor is Zn(2+).

Probable zinc metalloprotease whose natural substrate is unknown. In Methanocaldococcus jannaschii (strain ATCC 43067 / DSM 2661 / JAL-1 / JCM 10045 / NBRC 100440) (Methanococcus jannaschii), this protein is Archaemetzincin.